We begin with the raw amino-acid sequence, 411 residues long: Probable tRNA pseudouridine synthase D (411 aa).

Catalysis depends on aspartate 79, which acts as the Nucleophile. In terms of domain architecture, TRUD spans 150–369 (GFPNYFGQQR…STGDRRIVSA (220 aa)).

The protein belongs to the pseudouridine synthase TruD family.

It carries out the reaction uridine(13) in tRNA = pseudouridine(13) in tRNA. In terms of biological role, could be responsible for synthesis of pseudouridine from uracil-13 in transfer RNAs. This is Probable tRNA pseudouridine synthase D from Thermoplasma acidophilum (strain ATCC 25905 / DSM 1728 / JCM 9062 / NBRC 15155 / AMRC-C165).